The following is a 117-amino-acid chain: Large ribosomal subunit protein eL22 (117 aa).

Residues Ser49 and Ser50 each carry the phosphoserine modification.

The protein belongs to the eukaryotic ribosomal protein eL22 family. Component of the large ribosomal subunit (LSU). Mature yeast ribosomes consist of a small (40S) and a large (60S) subunit. The 40S small subunit contains 1 molecule of ribosomal RNA (18S rRNA) and at least 33 different proteins. The large 60S subunit contains 3 rRNA molecules (25S, 5.8S and 5S rRNA) and at least 46 different proteins.

It localises to the cytoplasm. The protein localises to the nucleus. Its subcellular location is the nucleolus. Component of the ribosome, a large ribonucleoprotein complex responsible for the synthesis of proteins in the cell. The small ribosomal subunit (SSU) binds messenger RNAs (mRNAs) and translates the encoded message by selecting cognate aminoacyl-transfer RNA (tRNA) molecules. The large subunit (LSU) contains the ribosomal catalytic site termed the peptidyl transferase center (PTC), which catalyzes the formation of peptide bonds, thereby polymerizing the amino acids delivered by tRNAs into a polypeptide chain. The nascent polypeptides leave the ribosome through a tunnel in the LSU and interact with protein factors that function in enzymatic processing, targeting, and the membrane insertion of nascent chains at the exit of the ribosomal tunnel. This Schizosaccharomyces pombe (strain 972 / ATCC 24843) (Fission yeast) protein is Large ribosomal subunit protein eL22 (rpl22).